We begin with the raw amino-acid sequence, 216 residues long: Adenylate kinase (216 aa).

11 to 16 lines the ATP pocket; that stretch reads GSGKGT. The NMP stretch occupies residues 31–60; sequence ATGDLFRKAIECGDELGDTVKSYMERGELV. AMP contacts are provided by residues Thr-32, Arg-37, 58-60, 86-89, and Gln-93; these read ELV and GFPR. The interval 127–163 is LID; the sequence is GRWVCRSCQSPYQSGCAEVTKGKCSRCQGGLYQRPDD. An ATP-binding site is contributed by Arg-128. The Zn(2+) site is built by Cys-131, Cys-134, Cys-150, and Cys-153. Residues Arg-160 and Arg-171 each coordinate AMP. Ala-199 contributes to the ATP binding site.

This sequence belongs to the adenylate kinase family. As to quaternary structure, monomer.

The protein resides in the cytoplasm. It carries out the reaction AMP + ATP = 2 ADP. It functions in the pathway purine metabolism; AMP biosynthesis via salvage pathway; AMP from ADP: step 1/1. Functionally, catalyzes the reversible transfer of the terminal phosphate group between ATP and AMP. Plays an important role in cellular energy homeostasis and in adenine nucleotide metabolism. The sequence is that of Adenylate kinase from Dehalococcoides mccartyi (strain CBDB1).